The chain runs to 245 residues: MKLFVYHTPELTPKDQVPDCAIAVDVLRATSTIATVLSAGGEAVQVFSDLDELIAVSEAWPPQKRLRAGERGGGKVTGFELGNSPLDCTPELVEGRRLFISTTNGTRALKRVQDSATVLTAAFINRAAVVQYLLEKQPEIVWIVGSGWEGSYSLEDTACAGAIAHSVVEKSQLPPEELAGNDEVISAIALYSQWQNNLLGLFHHASHGKRLLRLECYEDLKYCSQTDVLTVLPIQQEAGVFKTKN.

This sequence belongs to the ComB family. Requires Mg(2+) as cofactor.

It carries out the reaction (2R)-O-phospho-3-sulfolactate + H2O = (2R)-3-sulfolactate + phosphate. In Nostoc sp. (strain PCC 7120 / SAG 25.82 / UTEX 2576), this protein is Probable 2-phosphosulfolactate phosphatase.